The following is a 335-amino-acid chain: Ketol-acid reductoisomerase (NADP(+)) (335 aa).

One can recognise a KARI N-terminal Rossmann domain in the interval 5 to 185 (SKIYTDNDAN…GATRAGVIPT (181 aa)). Residues 28–31 (YGSQ), Ser-56, and 86–89 (DMVQ) each bind NADP(+). His-111 is an active-site residue. Gly-137 is an NADP(+) binding site. Positions 186–331 (TFKEETETDL…NQLRDLVQKG (146 aa)) constitute a KARI C-terminal knotted domain. Mg(2+) is bound by residues Asp-194, Glu-198, Glu-230, and Glu-234. Residue Ser-255 participates in substrate binding.

It belongs to the ketol-acid reductoisomerase family. Requires Mg(2+) as cofactor.

The enzyme catalyses (2R)-2,3-dihydroxy-3-methylbutanoate + NADP(+) = (2S)-2-acetolactate + NADPH + H(+). It carries out the reaction (2R,3R)-2,3-dihydroxy-3-methylpentanoate + NADP(+) = (S)-2-ethyl-2-hydroxy-3-oxobutanoate + NADPH + H(+). It functions in the pathway amino-acid biosynthesis; L-isoleucine biosynthesis; L-isoleucine from 2-oxobutanoate: step 2/4. The protein operates within amino-acid biosynthesis; L-valine biosynthesis; L-valine from pyruvate: step 2/4. Involved in the biosynthesis of branched-chain amino acids (BCAA). Catalyzes an alkyl-migration followed by a ketol-acid reduction of (S)-2-acetolactate (S2AL) to yield (R)-2,3-dihydroxy-isovalerate. In the isomerase reaction, S2AL is rearranged via a Mg-dependent methyl migration to produce 3-hydroxy-3-methyl-2-ketobutyrate (HMKB). In the reductase reaction, this 2-ketoacid undergoes a metal-dependent reduction by NADPH to yield (R)-2,3-dihydroxy-isovalerate. The polypeptide is Ketol-acid reductoisomerase (NADP(+)) (Saccharolobus solfataricus (strain ATCC 35092 / DSM 1617 / JCM 11322 / P2) (Sulfolobus solfataricus)).